Reading from the N-terminus, the 834-residue chain is Protein ROOT HAIR DEFECTIVE 3 homolog 2 (834 aa).

The Cytoplasmic segment spans residues 1 to 683; that stretch reads MGENDDGCST…EAHKRNNNWL (683 aa). The 216-residue stretch at 37–252 folds into the GB1/RHD3-type G domain; the sequence is GLSYAVVAIM…ISPGGLAGDR (216 aa). 47–54 contributes to the GTP binding site; it reads GPQSSGKS. Positions 214–241 form a coiled coil; the sequence is MIVALSSYEEKEKQFEQEVAELRQRFFH. Residues 684–704 form a helical membrane-spanning segment; the sequence is PPAWAIVLMIVLGFNEFMMLL. The Lumenal portion of the chain corresponds to 705-707; sequence KNP. The chain crosses the membrane as a helical span at residues 708–728; that stretch reads LYLLGFFVAFLLSKALWVQLD. Topologically, residues 729-834 are cytoplasmic; sequence IPREFQHGAV…NVQESEISQM (106 aa). Polar residues predominate over residues 767-783; the sequence is TTQEVPDLSASQTYRQQ. The segment at 767–834 is disordered; it reads TTQEVPDLSA…NVQESEISQM (68 aa). The segment covering 784–803 has biased composition (low complexity); sequence SPSHSISSTISESVASNISS. Residues 823-834 show a composition bias toward polar residues; it reads TNNVQESEISQM.

Belongs to the TRAFAC class dynamin-like GTPase superfamily. GB1/RHD3 GTPase family. RHD3 subfamily. Expressed in roots, leaves, stems and flowers.

It localises to the endoplasmic reticulum membrane. Functionally, probable GTP-binding protein that may be involved in cell development. This is Protein ROOT HAIR DEFECTIVE 3 homolog 2 from Arabidopsis thaliana (Mouse-ear cress).